The sequence spans 360 residues: Bifunctional protein FolD 4, chloroplastic (360 aa).

The N-terminal 51 residues, 1–51 (MASMMFTDCSSTTTSRLIHLNRSSGTFLLRQCVGQLRLQTTASGRGCCIRS), are a transit peptide targeting the chloroplast. S52 carries the post-translational modification N-acetylserine.

This sequence belongs to the tetrahydrofolate dehydrogenase/cyclohydrolase family. As to quaternary structure, homodimer.

The protein resides in the plastid. It is found in the chloroplast. The catalysed reaction is (6R)-5,10-methylene-5,6,7,8-tetrahydrofolate + NADP(+) = (6R)-5,10-methenyltetrahydrofolate + NADPH. It carries out the reaction (6R)-5,10-methenyltetrahydrofolate + H2O = (6R)-10-formyltetrahydrofolate + H(+). It participates in one-carbon metabolism; tetrahydrofolate interconversion. In terms of biological role, catalyzes the oxidation of 5,10-methylenetetrahydrofolate to 5,10-methenyltetrahydrofolate and then the hydrolysis of 5,10-methenyltetrahydrofolate to 10-formyltetrahydrofolate. In Arabidopsis thaliana (Mouse-ear cress), this protein is Bifunctional protein FolD 4, chloroplastic (FOLD4).